The primary structure comprises 379 residues: Hydrogenase expression/formation protein HupD (379 aa).

Residues cysteine 36, cysteine 64, and cysteine 67 each coordinate Fe cation.

This sequence belongs to the HypD family.

This is Hydrogenase expression/formation protein HupD (hupD) from Azotobacter chroococcum mcd 1.